A 333-amino-acid polypeptide reads, in one-letter code: Nucleoid-associated protein HAPS_0704 (333 aa).

This sequence belongs to the YejK family.

The protein resides in the cytoplasm. Its subcellular location is the nucleoid. The protein is Nucleoid-associated protein HAPS_0704 of Glaesserella parasuis serovar 5 (strain SH0165) (Haemophilus parasuis).